We begin with the raw amino-acid sequence, 478 residues long: Odorant receptor coreceptor (478 aa).

Topologically, residues 1-43 are cytoplasmic; the sequence is MNVQPTKYHGLVLDLMPNIRLMQGFGHFLFRYVNGPVLIRKLY. The chain crosses the membrane as a helical span at residues 44–64; it reads SWWNLIMILLQYFAIMGNLVM. At 65 to 73 the chain is on the extracellular side; the sequence is NTGDVNELT. The helical transmembrane segment at 74–94 threads the bilayer; that stretch reads ANTITTLFFTHSVTKFIYVAV. At 95-133 the chain is on the cytoplasmic side; the sequence is NSEHFYRTLGIWNQPNSHSLFAESDARYHSIALAKMRKL. A helical transmembrane segment spans residues 134 to 154; sequence LVMVMVTTVLSVVAWITITFF. Topologically, residues 155–187 are extracellular; it reads GDSVKNVFDKETNETYTVEIPRLPIKAWYPWDA. The N-linked (GlcNAc...) asparagine glycan is linked to Asn-167. The helical transmembrane segment at 188-208 threads the bilayer; it reads MSGVPYFFSFIYQAYFLLFSM. Residues 209–343 lie on the Cytoplasmic side of the membrane; that stretch reads CQANLADVMF…VERHKHVVRL (135 aa). A helical membrane pass occupies residues 344–364; sequence VSAIGETYGAALLLHMLTSTI. The Extracellular portion of the chain corresponds to 365–382; it reads KLTLLAYQATKIDALNVY. The helical transmembrane segment at 383–403 threads the bilayer; sequence GLTVIGYLVYALAQVFLFCIF. At 404 to 454 the chain is on the cytoplasmic side; it reads GNRLIEESSSVMEAAYSCHWYDGSEEAKTFVQIVCQQCQKAMTISGAKFFT. Residues 455-475 form a helical membrane-spanning segment; sequence VSLDLFASVLGAVVTYFMVLV. The Extracellular portion of the chain corresponds to 476–478; it reads QLK.

Belongs to the insect chemoreceptor superfamily. Heteromeric odorant receptor channel (TC 1.A.69) family. Orco subfamily. In terms of assembly, heterodimer with conventional odorant receptors (ORs). Complexes exist early in the endomembrane system in olfactory sensory neurons (OSNs), coupling these complexes to the conserved ciliary trafficking pathway. Found specifically within most antennal and maxillary palp sensilla, as well as in a subset of proboscis sensilla.

The protein resides in the cell membrane. Its function is as follows. Odorant coreceptor which complexes with conventional odorant receptors (ORs) to form odorant-sensing units, providing sensitive and prolonged odorant signaling and calcium permeability. Orco is a universal and integral part of the functional odorant receptor, involved in the dendritic localization of other olfactory receptors. Plays a key role in preferred attraction of females for humans over non-human hosts for blood feeding. Human attraction plays a crucial role in the transmission of dengue and yellow fever by the mosquito. Also required for the response to the insect repellent IR3535; or to N,N-Diethyl-meta-toluamide (DEET), the most widely used insect repellent worldwide. The chain is Odorant receptor coreceptor (SGPRor7) from Aedes aegypti (Yellowfever mosquito).